Consider the following 62-residue polypeptide: Zinc metalloproteinase-disintegrin-like BaG (62 aa).

One can recognise a Peptidase M12B domain in the interval 24–54 (KTDLLNRSHDNAQLSPINLVVAVIMAHEMGH). Asn-29 carries an N-linked (GlcNAc...) asparagine glycan. Residue His-50 participates in Zn(2+) binding. Glu-51 is a catalytic residue. Residue His-54 coordinates Zn(2+).

This sequence belongs to the venom metalloproteinase (M12B) family. P-III subfamily. P-IIIc sub-subfamily. In terms of assembly, dimer. Zn(2+) is required as a cofactor. The N-terminus is blocked. Expressed by the venom gland.

The protein resides in the secreted. Inhibited by EDTA, and 1,10-phenanthroline. Its function is as follows. Snake venom Zinc metalloproteinase that inhibits ADP-induced platelet aggregation and inhibits the alpha-5/beta-1 (ITGA5/ITGB1) integrin, a fibronectin receptor. Has caseinolytic activity. Induces the detachment of cells that are bound to fibronectin. In Bothrops alternatus (Urutu), this protein is Zinc metalloproteinase-disintegrin-like BaG.